We begin with the raw amino-acid sequence, 406 residues long: Type II secretion system protein F (406 aa).

Topologically, residues 1–171 (MAAFEYKALD…KMRSKLQQAM (171 aa)) are cytoplasmic. E97, E151, and D155 together coordinate Ca(2+). A helical transmembrane segment spans residues 172–192 (IYPVVLVVFAVGIVAFLLAAV). The Periplasmic segment spans residues 193 to 223 (VPKIVGQFVQMGQALPASTQFLLDASDFLQH). Residues 224–244 (WGISLLVGLLMLIYLVRWLLT) form a helical membrane-spanning segment. The Cytoplasmic portion of the chain corresponds to 245-368 (KPDIRLRWDR…QDNSFESTVN (124 aa)). A helical membrane pass occupies residues 369 to 389 (IALGIFTPALIALMAGMVLFI). The Periplasmic segment spans residues 390–406 (VMATLMPILEMNNLMSR).

This sequence belongs to the GSP F family. Type II secretion system is composed of four main components: the outer membrane complex, the inner membrane complex, the cytoplasmic secretion ATPase and the periplasm-spanning pseudopilus. Homodimer. Interacts with EpsE/GspE and EpsL/GspL components.

Its subcellular location is the cell inner membrane. Component of the type II secretion system inner membrane complex required for the energy-dependent secretion of extracellular factors such as proteases and toxins from the periplasm. The polypeptide is Type II secretion system protein F (epsF) (Vibrio cholerae serotype O1 (strain ATCC 39315 / El Tor Inaba N16961)).